Reading from the N-terminus, the 316-residue chain is MLP-like protein 34 (316 aa).

It belongs to the MLP family.

This Arabidopsis thaliana (Mouse-ear cress) protein is MLP-like protein 34 (MLP34).